The following is a 909-amino-acid chain: Protein translocase subunit SecA (909 aa).

ATP-binding positions include Gln87, 105–109, and Asp514; that span reads GEGKT. Residues 879–909 are disordered; it reads TPVQGGPKVGRNDPCPCGSGKKYKHCHGKLS. Cys893, Cys895, Cys904, and His905 together coordinate Zn(2+). Basic residues predominate over residues 899–909; it reads KKYKHCHGKLS.

This sequence belongs to the SecA family. Monomer and homodimer. Part of the essential Sec protein translocation apparatus which comprises SecA, SecYEG and auxiliary proteins SecDF-YajC and YidC. Zn(2+) is required as a cofactor.

The protein localises to the cell inner membrane. It localises to the cytoplasm. It catalyses the reaction ATP + H2O + cellular proteinSide 1 = ADP + phosphate + cellular proteinSide 2.. Its function is as follows. Part of the Sec protein translocase complex. Interacts with the SecYEG preprotein conducting channel. Has a central role in coupling the hydrolysis of ATP to the transfer of proteins into and across the cell membrane, serving both as a receptor for the preprotein-SecB complex and as an ATP-driven molecular motor driving the stepwise translocation of polypeptide chains across the membrane. In Azoarcus sp. (strain BH72), this protein is Protein translocase subunit SecA.